Reading from the N-terminus, the 582-residue chain is Putative frv operon regulatory protein (582 aa).

The segment at residues 20-39 (PGELAQQTGVSGRTILRDID) is a DNA-binding region (H-T-H motif). The PTS EIIA type-2 domain maps to 443-582 (RFFSAPGSFH…EAFMELLHKG (140 aa)). The residue at position 505 (His-505) is a Phosphohistidine; by HPr.

In terms of biological role, could be involved in the regulation of the transcription of the FRV operon. This Escherichia coli (strain K12) protein is Putative frv operon regulatory protein (frvR).